Here is a 113-residue protein sequence, read N- to C-terminus: Cytochrome c55X (113 aa).

A signal peptide spans 1–26; sequence MTVARHAVSRLGLALASFLLFPLALA. C45, C48, and H49 together coordinate heme c.

Post-translationally, binds 1 heme c group covalently per subunit.

Its subcellular location is the periplasm. Functionally, monoheme c-type cytochrome. The protein is Cytochrome c55X (nirC) of Stutzerimonas stutzeri (Pseudomonas stutzeri).